We begin with the raw amino-acid sequence, 189 residues long: GTP cyclohydrolase 1 (189 aa).

The Zn(2+) site is built by cysteine 78, histidine 81, and cysteine 150.

The protein belongs to the GTP cyclohydrolase I family. In terms of assembly, toroid-shaped homodecamer, composed of two pentamers of five dimers.

The enzyme catalyses GTP + H2O = 7,8-dihydroneopterin 3'-triphosphate + formate + H(+). It participates in cofactor biosynthesis; 7,8-dihydroneopterin triphosphate biosynthesis; 7,8-dihydroneopterin triphosphate from GTP: step 1/1. In Listeria welshimeri serovar 6b (strain ATCC 35897 / DSM 20650 / CCUG 15529 / CIP 8149 / NCTC 11857 / SLCC 5334 / V8), this protein is GTP cyclohydrolase 1.